We begin with the raw amino-acid sequence, 340 residues long: Fructoselysine 6-phosphate deglycase (340 aa).

SIS domains are found at residues 35–169 and 201–331; these read IVEE…RLAP and LGEL…PDER.

As to quaternary structure, homododecamer.

It carries out the reaction N(6)-(6-phospho-D-fructosyl)-L-lysine + H2O = D-glucose 6-phosphate + L-lysine. It functions in the pathway carbohydrate metabolism; fructoselysine degradation; D-glucose 6-phosphate and lysine from fructoselysine: step 2/2. In terms of biological role, catalyzes the reversible conversion of fructoselysine 6-phosphate to glucose 6-phosphate and lysine. Functions in a fructoselysine degradation pathway that allows E.coli to grow on fructoselysine or psicoselysine. This is Fructoselysine 6-phosphate deglycase (frlB) from Escherichia coli O157:H7.